A 278-amino-acid polypeptide reads, in one-letter code: Elongation factor Ts (278 aa).

Positions 82 to 85 (TDFV) are involved in Mg(2+) ion dislocation from EF-Tu.

Belongs to the EF-Ts family.

The protein localises to the cytoplasm. Its function is as follows. Associates with the EF-Tu.GDP complex and induces the exchange of GDP to GTP. It remains bound to the aminoacyl-tRNA.EF-Tu.GTP complex up to the GTP hydrolysis stage on the ribosome. The polypeptide is Elongation factor Ts (Streptomyces avermitilis (strain ATCC 31267 / DSM 46492 / JCM 5070 / NBRC 14893 / NCIMB 12804 / NRRL 8165 / MA-4680)).